Here is a 331-residue protein sequence, read N- to C-terminus: 5'-AMP-activated protein kinase subunit gamma-1 (331 aa).

A compositionally biased stretch (polar residues) spans 1–12; the sequence is METVISSDSSPA. Residues 1-26 form a disordered region; that stretch reads METVISSDSSPAVENEHPQETPESNN. CBS domains lie at 43–103, 125–187, and 198–260; these read PTSS…KSAL, SFKP…PKPE, and IGTY…NLDV. ADP-binding positions include arginine 70, 85 to 90, valine 130, 151 to 152, and lysine 170; these read MLTITD and HR. AMP contacts are provided by residues arginine 70, 85–90, valine 130, histidine 151, 151–152, lysine 170, threonine 200, alanine 205, 226–227, and 242–245; these read MLTITD, HR, SA, and SKFD. ATP-binding positions include arginine 70, 85–90, valine 130, 151–152, arginine 152, and lysine 170; these read MLTITD and HR. The AMPK pseudosubstrate motif lies at 138 to 159; sequence LFDAVSSLIRNKIHRLPVIDPE. 242–245 contributes to the ADP binding site; the sequence is SKFD. Residue 242 to 245 participates in ATP binding; that stretch reads SKFD. Serine 261 bears the Phosphoserine; by ULK1 mark. Threonine 263 bears the Phosphothreonine; by ULK1 mark. ADP is bound at residue arginine 269. AMP is bound at residue arginine 269. Arginine 269 contacts ATP. Serine 270 is subject to Phosphoserine; by ULK1. The 58-residue stretch at 272-329 folds into the CBS 4 domain; it reads YFEGVLKCYLHETLETIINRLVEAEVHRLVVVDENDVVKGIVSLSDILQALVLTGGEK. Residues leucine 277 and 298–299 contribute to the ADP site; that span reads HR. AMP contacts are provided by residues leucine 277, histidine 298, 298 to 299, and 314 to 317; these read HR and SLSD. ATP is bound by residues leucine 277 and 298-299; that span reads HR.

Belongs to the 5'-AMP-activated protein kinase gamma subunit family. As to quaternary structure, AMPK is a heterotrimer of an alpha catalytic subunit (PRKAA1 or PRKAA2), a beta (PRKAB1 or PRKAB2) and a gamma non-catalytic subunits (PRKAG1, PRKAG2 or PRKAG3). Interacts with FNIP1 and FNIP2. Post-translationally, phosphorylated by ULK1 and ULK2; leading to negatively regulate AMPK activity and suggesting the existence of a regulatory feedback loop between ULK1, ULK2 and AMPK. In terms of processing, glycosylated; O-GlcNAcylated by OGT, promoting the AMP-activated protein kinase (AMPK) activity.

AMP/ATP-binding subunit of AMP-activated protein kinase (AMPK), an energy sensor protein kinase that plays a key role in regulating cellular energy metabolism. In response to reduction of intracellular ATP levels, AMPK activates energy-producing pathways and inhibits energy-consuming processes: inhibits protein, carbohydrate and lipid biosynthesis, as well as cell growth and proliferation. AMPK acts via direct phosphorylation of metabolic enzymes, and by longer-term effects via phosphorylation of transcription regulators. Also acts as a regulator of cellular polarity by remodeling the actin cytoskeleton; probably by indirectly activating myosin. Gamma non-catalytic subunit mediates binding to AMP, ADP and ATP, leading to activate or inhibit AMPK: AMP-binding results in allosteric activation of alpha catalytic subunit (PRKAA1 or PRKAA2) both by inducing phosphorylation and preventing dephosphorylation of catalytic subunits. ADP also stimulates phosphorylation, without stimulating already phosphorylated catalytic subunit. ATP promotes dephosphorylation of catalytic subunit, rendering the AMPK enzyme inactive. This chain is 5'-AMP-activated protein kinase subunit gamma-1 (PRKAG1), found in Homo sapiens (Human).